A 61-amino-acid polypeptide reads, in one-letter code: Nakoroxin (61 aa).

Cystine bridges form between C3–C19, C12–C37, C41–C49, and C50–C55.

This sequence belongs to the three-finger toxin family. Short-chain subfamily. In terms of tissue distribution, expressed by the venom gland.

Its subcellular location is the secreted. In terms of biological role, shows no cytotoxicity and does not inhibit the binding of alpha-bungarotoxin to nicotinic acetylcholine receptors of muscle and alpha-7/CHRNA7 types. However, it potentiates the binding of alpha-bungarotoxin to the acetylcholine-binding protein from Lymnaea stagnalis. This is Nakoroxin from Naja kaouthia (Monocled cobra).